A 129-amino-acid chain; its full sequence is Gene 58 protein (129 aa).

Residues 87–129 form a disordered region; that stretch reads GNIPVQRKPARKPSRRVFGESRSSGSSGSTVRPGIRGRSTPWS. The span at 106-115 shows a compositional bias: low complexity; the sequence is ESRSSGSSGS.

This Mycobacterium (Mycobacteriophage D29) protein is Gene 58 protein (58).